The chain runs to 688 residues: Glycine--tRNA ligase beta subunit (688 aa).

It belongs to the class-II aminoacyl-tRNA synthetase family. As to quaternary structure, tetramer of two alpha and two beta subunits.

The protein resides in the cytoplasm. It carries out the reaction tRNA(Gly) + glycine + ATP = glycyl-tRNA(Gly) + AMP + diphosphate. This is Glycine--tRNA ligase beta subunit from Aliivibrio fischeri (strain MJ11) (Vibrio fischeri).